Consider the following 570-residue polypeptide: Urease subunit alpha (570 aa).

The Urease domain occupies 131–570 (GGFDSHIHFI…LPMAQRYFMY (440 aa)). Ni(2+)-binding residues include histidine 136, histidine 138, and lysine 219. Lysine 219 bears the N6-carboxylysine mark. Position 221 (histidine 221) interacts with substrate. Ni(2+)-binding residues include histidine 248 and histidine 274. Catalysis depends on histidine 322, which acts as the Proton donor. Aspartate 362 is a binding site for Ni(2+).

This sequence belongs to the metallo-dependent hydrolases superfamily. Urease alpha subunit family. Heterotrimer of UreA (gamma), UreB (beta) and UreC (alpha) subunits. Three heterotrimers associate to form the active enzyme. Ni cation is required as a cofactor. Post-translationally, carboxylation allows a single lysine to coordinate two nickel ions.

It is found in the cytoplasm. The catalysed reaction is urea + 2 H2O + H(+) = hydrogencarbonate + 2 NH4(+). Its pathway is nitrogen metabolism; urea degradation; CO(2) and NH(3) from urea (urease route): step 1/1. In Rhodopseudomonas palustris (strain BisB18), this protein is Urease subunit alpha.